Consider the following 271-residue polypeptide: Shikimate dehydrogenase (NADP(+)) (271 aa).

Shikimate contacts are provided by residues 14 to 16 (SLS) and Thr61. Catalysis depends on Lys65, which acts as the Proton acceptor. 2 residues coordinate shikimate: Asn86 and Asp101. NADP(+) is bound by residues 125–129 (GAGGA) and Ile212. Tyr214 contributes to the shikimate binding site. Position 235 (Gly235) interacts with NADP(+).

The protein belongs to the shikimate dehydrogenase family. In terms of assembly, homodimer.

The enzyme catalyses shikimate + NADP(+) = 3-dehydroshikimate + NADPH + H(+). It functions in the pathway metabolic intermediate biosynthesis; chorismate biosynthesis; chorismate from D-erythrose 4-phosphate and phosphoenolpyruvate: step 4/7. In terms of biological role, involved in the biosynthesis of the chorismate, which leads to the biosynthesis of aromatic amino acids. Catalyzes the reversible NADPH linked reduction of 3-dehydroshikimate (DHSA) to yield shikimate (SA). This chain is Shikimate dehydrogenase (NADP(+)), found in Clostridium perfringens (strain SM101 / Type A).